Consider the following 383-residue polypeptide: Hydroxymethylglutaryl-CoA synthase (383 aa).

Asp29 is a (3S)-3-hydroxy-3-methylglutaryl-CoA binding site. Catalysis depends on Glu79, which acts as the Proton donor/acceptor. Cys111, Thr152, Ser201, His233, Lys242, Asn275, and Ser308 together coordinate (3S)-3-hydroxy-3-methylglutaryl-CoA. The active-site Acyl-thioester intermediate is the Cys111. The active-site Proton donor/acceptor is His233.

The protein belongs to the thiolase-like superfamily. HMG-CoA synthase family. Homodimer.

The catalysed reaction is acetoacetyl-CoA + acetyl-CoA + H2O = (3S)-3-hydroxy-3-methylglutaryl-CoA + CoA + H(+). Its pathway is metabolic intermediate biosynthesis; (R)-mevalonate biosynthesis; (R)-mevalonate from acetyl-CoA: step 2/3. Its activity is regulated as follows. Is sensitive to feedback substrate inhibition by acetoacetyl-CoA. Is inactivated by hymeglusin, which also blocks the growth of E.faecalis, indicating the critical role that the mevalonate pathway plays in isoprenoid biosynthesis. Functionally, catalyzes the condensation of acetyl-CoA with acetoacetyl-CoA to form 3-hydroxy-3-methylglutaryl-CoA (HMG-CoA). Functions in the mevalonate (MVA) pathway leading to isopentenyl diphosphate (IPP), a key precursor for the biosynthesis of isoprenoid compounds. In Enterococcus faecalis (Streptococcus faecalis), this protein is Hydroxymethylglutaryl-CoA synthase (mvaS).